Consider the following 434-residue polypeptide: Serine hydroxymethyltransferase (434 aa).

(6S)-5,6,7,8-tetrahydrofolate-binding positions include Leu133 and 137-139; that span reads GHL. An N6-(pyridoxal phosphate)lysine modification is found at Lys242.

This sequence belongs to the SHMT family. In terms of assembly, homodimer. Requires pyridoxal 5'-phosphate as cofactor.

It localises to the cytoplasm. It catalyses the reaction (6R)-5,10-methylene-5,6,7,8-tetrahydrofolate + glycine + H2O = (6S)-5,6,7,8-tetrahydrofolate + L-serine. Its pathway is one-carbon metabolism; tetrahydrofolate interconversion. It functions in the pathway amino-acid biosynthesis; glycine biosynthesis; glycine from L-serine: step 1/1. Its function is as follows. Catalyzes the reversible interconversion of serine and glycine with tetrahydrofolate (THF) serving as the one-carbon carrier. This reaction serves as the major source of one-carbon groups required for the biosynthesis of purines, thymidylate, methionine, and other important biomolecules. Also exhibits THF-independent aldolase activity toward beta-hydroxyamino acids, producing glycine and aldehydes, via a retro-aldol mechanism. The protein is Serine hydroxymethyltransferase of Caulobacter sp. (strain K31).